Reading from the N-terminus, the 272-residue chain is Shikimate dehydrogenase (NADP(+)) (272 aa).

Residues 14–16 and Thr61 contribute to the shikimate site; that span reads SKS. Lys65 serves as the catalytic Proton acceptor. NADP(+) is bound at residue Glu77. Residues Asn86 and Asp102 each contribute to the shikimate site. NADP(+) is bound by residues 126–130, 149–154, and Met213; these read GAGGA and NRTVSR. Tyr215 lines the shikimate pocket. An NADP(+)-binding site is contributed by Gly237.

The protein belongs to the shikimate dehydrogenase family. Homodimer.

It catalyses the reaction shikimate + NADP(+) = 3-dehydroshikimate + NADPH + H(+). The protein operates within metabolic intermediate biosynthesis; chorismate biosynthesis; chorismate from D-erythrose 4-phosphate and phosphoenolpyruvate: step 4/7. Involved in the biosynthesis of the chorismate, which leads to the biosynthesis of aromatic amino acids. Catalyzes the reversible NADPH linked reduction of 3-dehydroshikimate (DHSA) to yield shikimate (SA). This Escherichia coli O6:H1 (strain CFT073 / ATCC 700928 / UPEC) protein is Shikimate dehydrogenase (NADP(+)).